Consider the following 400-residue polypeptide: Acetate kinase (400 aa).

Residue Asn-10 coordinates Mg(2+). Lys-17 lines the ATP pocket. Arg-91 is a binding site for substrate. Catalysis depends on Asp-150, which acts as the Proton donor/acceptor. Residues 210 to 214 (HLGNG), 285 to 287 (DCR), and 333 to 337 (GIGEN) each bind ATP. Mg(2+) is bound at residue Glu-387.

The protein belongs to the acetokinase family. As to quaternary structure, homodimer. Requires Mg(2+) as cofactor. Mn(2+) is required as a cofactor.

The protein localises to the cytoplasm. It catalyses the reaction acetate + ATP = acetyl phosphate + ADP. It participates in metabolic intermediate biosynthesis; acetyl-CoA biosynthesis; acetyl-CoA from acetate: step 1/2. In terms of biological role, catalyzes the formation of acetyl phosphate from acetate and ATP. Can also catalyze the reverse reaction. This is Acetate kinase from Pectobacterium atrosepticum (strain SCRI 1043 / ATCC BAA-672) (Erwinia carotovora subsp. atroseptica).